The primary structure comprises 765 residues: Probable dipeptidyl peptidase 4 (765 aa).

The signal sequence occupies residues 1–14; it reads MKWSILLLVGCAAA. N35, N78, N101, N110, N169, N218, N465, and N490 each carry an N-linked (GlcNAc...) asparagine glycan. S613 functions as the Charge relay system in the catalytic mechanism. N-linked (GlcNAc...) asparagine glycosylation occurs at N665. Active-site charge relay system residues include D690 and H725.

This sequence belongs to the peptidase S9B family.

The protein localises to the secreted. It catalyses the reaction Release of an N-terminal dipeptide, Xaa-Yaa-|-Zaa-, from a polypeptide, preferentially when Yaa is Pro, provided Zaa is neither Pro nor hydroxyproline.. Functionally, extracellular dipeptidyl-peptidase which removes N-terminal dipeptides sequentially from polypeptides having unsubstituted N-termini provided that the penultimate residue is proline. Contributes to pathogenicity. This is Probable dipeptidyl peptidase 4 (dpp4) from Aspergillus fumigatus (strain CBS 144.89 / FGSC A1163 / CEA10) (Neosartorya fumigata).